The following is a 337-amino-acid chain: Anthranilate phosphoribosyltransferase (337 aa).

Residues G81, 84–85 (GD), T89, 91–94 (NIST), 109–117 (KHGNRALSS), and T121 each bind 5-phospho-alpha-D-ribose 1-diphosphate. Residue G81 participates in anthranilate binding. S93 contributes to the Mg(2+) binding site. An anthranilate-binding site is contributed by N112. Residue R167 coordinates anthranilate. 2 residues coordinate Mg(2+): D225 and E226.

Belongs to the anthranilate phosphoribosyltransferase family. In terms of assembly, homodimer. The cofactor is Mg(2+).

It carries out the reaction N-(5-phospho-beta-D-ribosyl)anthranilate + diphosphate = 5-phospho-alpha-D-ribose 1-diphosphate + anthranilate. The protein operates within amino-acid biosynthesis; L-tryptophan biosynthesis; L-tryptophan from chorismate: step 2/5. In terms of biological role, catalyzes the transfer of the phosphoribosyl group of 5-phosphorylribose-1-pyrophosphate (PRPP) to anthranilate to yield N-(5'-phosphoribosyl)-anthranilate (PRA). The polypeptide is Anthranilate phosphoribosyltransferase (Rhizobium meliloti (strain 1021) (Ensifer meliloti)).